A 461-amino-acid polypeptide reads, in one-letter code: Major capsid protein (461 aa).

The span at 1 to 18 (MSTPTISADTTAQNATST) shows a compositional bias: polar residues. The disordered stretch occupies residues 1 to 22 (MSTPTISADTTAQNATSTEVRE).

It localises to the virion. In terms of biological role, major protein of the capsid. This Spodoptera frugiperda ascovirus 1a (SfAV-1a) protein is Major capsid protein (MCP).